A 235-amino-acid polypeptide reads, in one-letter code: Transcriptional regulatory protein CseB (235 aa).

In terms of domain architecture, Response regulatory spans 6-119; sequence HVLFVEDDDV…VLVARIRAVL (114 aa). The residue at position 55 (aspartate 55) is a 4-aspartylphosphate. The ompR/PhoB-type DNA-binding region spans 141-235; it reads GGVLTFGELE…VRGFGYKLKA (95 aa).

Phosphorylated by CseC.

The protein resides in the cytoplasm. Its function is as follows. Member of the two-component regulatory system CseB/CseC involved in the stability of the cell envelope. CseB activates transcription of RNA polymerase sigma-E factor, in response to changes in the cell envelope. The chain is Transcriptional regulatory protein CseB (cseB) from Streptomyces avermitilis (strain ATCC 31267 / DSM 46492 / JCM 5070 / NBRC 14893 / NCIMB 12804 / NRRL 8165 / MA-4680).